The primary structure comprises 119 residues: Large ribosomal subunit protein uL22 (119 aa).

It belongs to the universal ribosomal protein uL22 family. In terms of assembly, part of the 50S ribosomal subunit.

Its function is as follows. This protein binds specifically to 23S rRNA; its binding is stimulated by other ribosomal proteins, e.g. L4, L17, and L20. It is important during the early stages of 50S assembly. It makes multiple contacts with different domains of the 23S rRNA in the assembled 50S subunit and ribosome. Functionally, the globular domain of the protein is located near the polypeptide exit tunnel on the outside of the subunit, while an extended beta-hairpin is found that lines the wall of the exit tunnel in the center of the 70S ribosome. This is Large ribosomal subunit protein uL22 from Rhodopirellula baltica (strain DSM 10527 / NCIMB 13988 / SH1).